Here is an 82-residue protein sequence, read N- to C-terminus: Large ribosomal subunit protein bL27 (82 aa).

Positions 1-26 (MAHKKGQGASRNGRDSESKRLGMKVG) are disordered.

This sequence belongs to the bacterial ribosomal protein bL27 family.

This is Large ribosomal subunit protein bL27 from Chlamydia felis (strain Fe/C-56) (Chlamydophila felis).